We begin with the raw amino-acid sequence, 237 residues long: Ribosomal RNA small subunit methyltransferase G (237 aa).

S-adenosyl-L-methionine is bound by residues glycine 78, phenylalanine 83, alanine 129 to glutamate 130, and arginine 148. The interval lysine 218–leucine 237 is disordered.

This sequence belongs to the methyltransferase superfamily. RNA methyltransferase RsmG family.

The protein localises to the cytoplasm. Specifically methylates the N7 position of a guanine in 16S rRNA. This Streptococcus pneumoniae (strain ATCC BAA-255 / R6) protein is Ribosomal RNA small subunit methyltransferase G.